The following is a 510-amino-acid chain: Histidine ammonia-lyase (510 aa).

Positions Ala145–Gly147 form a cross-link, 5-imidazolinone (Ala-Gly). Ser146 is subject to 2,3-didehydroalanine (Ser).

The protein belongs to the PAL/histidase family. Post-translationally, contains an active site 4-methylidene-imidazol-5-one (MIO), which is formed autocatalytically by cyclization and dehydration of residues Ala-Ser-Gly.

The protein localises to the cytoplasm. The catalysed reaction is L-histidine = trans-urocanate + NH4(+). Its pathway is amino-acid degradation; L-histidine degradation into L-glutamate; N-formimidoyl-L-glutamate from L-histidine: step 1/3. The protein is Histidine ammonia-lyase of Stigmatella aurantiaca.